A 450-amino-acid chain; its full sequence is UDP-N-acetylmuramoylalanine--D-glutamate ligase (450 aa).

119–125 (GSNGKTT) is an ATP binding site.

This sequence belongs to the MurCDEF family.

It is found in the cytoplasm. It catalyses the reaction UDP-N-acetyl-alpha-D-muramoyl-L-alanine + D-glutamate + ATP = UDP-N-acetyl-alpha-D-muramoyl-L-alanyl-D-glutamate + ADP + phosphate + H(+). The protein operates within cell wall biogenesis; peptidoglycan biosynthesis. Cell wall formation. Catalyzes the addition of glutamate to the nucleotide precursor UDP-N-acetylmuramoyl-L-alanine (UMA). The protein is UDP-N-acetylmuramoylalanine--D-glutamate ligase of Bacillus cereus (strain B4264).